Reading from the N-terminus, the 555-residue chain is CTP synthase (555 aa).

Positions 1–265 (MTRYIFITGG…GNRVCEKLNI (265 aa)) are amidoligase domain. Serine 13 is a CTP binding site. Serine 13 contacts UTP. Residues 14 to 19 (SLGKGI) and aspartate 71 each bind ATP. 2 residues coordinate Mg(2+): aspartate 71 and glutamate 139. Residues 146 to 148 (DIE), 186 to 191 (KTKPTQ), and lysine 222 contribute to the CTP site. UTP contacts are provided by residues 186-191 (KTKPTQ) and lysine 222. The 252-residue stretch at 290-541 (TVAVVGKYVD…IKAGLAAKEA (252 aa)) folds into the Glutamine amidotransferase type-1 domain. L-glutamine is bound at residue glycine 351. Residue cysteine 378 is the Nucleophile; for glutamine hydrolysis of the active site. L-glutamine is bound by residues 379–382 (LGMQ), glutamate 402, and arginine 469. Active-site residues include histidine 514 and glutamate 516.

The protein belongs to the CTP synthase family. Homotetramer.

The catalysed reaction is UTP + L-glutamine + ATP + H2O = CTP + L-glutamate + ADP + phosphate + 2 H(+). It catalyses the reaction L-glutamine + H2O = L-glutamate + NH4(+). It carries out the reaction UTP + NH4(+) + ATP = CTP + ADP + phosphate + 2 H(+). It functions in the pathway pyrimidine metabolism; CTP biosynthesis via de novo pathway; CTP from UDP: step 2/2. With respect to regulation, allosterically activated by GTP, when glutamine is the substrate; GTP has no effect on the reaction when ammonia is the substrate. The allosteric effector GTP functions by stabilizing the protein conformation that binds the tetrahedral intermediate(s) formed during glutamine hydrolysis. Inhibited by the product CTP, via allosteric rather than competitive inhibition. Its function is as follows. Catalyzes the ATP-dependent amination of UTP to CTP with either L-glutamine or ammonia as the source of nitrogen. Regulates intracellular CTP levels through interactions with the four ribonucleotide triphosphates. The sequence is that of CTP synthase from Coxiella burnetii (strain RSA 331 / Henzerling II).